The primary structure comprises 185 residues: Ribosome-recycling factor (185 aa).

The disordered stretch occupies residues 136–155 (NDDLKKLEKNGDITEDELRA).

The protein belongs to the RRF family.

The protein localises to the cytoplasm. In terms of biological role, responsible for the release of ribosomes from messenger RNA at the termination of protein biosynthesis. May increase the efficiency of translation by recycling ribosomes from one round of translation to another. The protein is Ribosome-recycling factor of Bacillus velezensis (strain DSM 23117 / BGSC 10A6 / LMG 26770 / FZB42) (Bacillus amyloliquefaciens subsp. plantarum).